The chain runs to 177 residues: ATP-dependent protease subunit HslV (177 aa).

The active site involves Thr6. Na(+)-binding residues include Ala162, Cys165, and Thr168.

It belongs to the peptidase T1B family. HslV subfamily. A double ring-shaped homohexamer of HslV is capped on each side by a ring-shaped HslU homohexamer. The assembly of the HslU/HslV complex is dependent on binding of ATP.

It localises to the cytoplasm. The enzyme catalyses ATP-dependent cleavage of peptide bonds with broad specificity.. With respect to regulation, allosterically activated by HslU binding. Its function is as follows. Protease subunit of a proteasome-like degradation complex believed to be a general protein degrading machinery. This is ATP-dependent protease subunit HslV from Desulfovibrio desulfuricans (strain ATCC 27774 / DSM 6949 / MB).